A 181-amino-acid chain; its full sequence is UPF0397 protein str0306 (181 aa).

5 helical membrane-spanning segments follow: residues A11 to F31, L45 to L65, G72 to F92, I109 to I129, and F147 to I167.

It belongs to the UPF0397 family.

Its subcellular location is the cell membrane. The protein is UPF0397 protein str0306 of Streptococcus thermophilus (strain CNRZ 1066).